We begin with the raw amino-acid sequence, 1326 residues long: Putative late blight resistance protein homolog R1B-19 (1326 aa).

2 coiled-coil regions span residues 421–444 and 536–558; these read RYSD…ESLQ and PRMK…KLLN. 570–577 is a binding site for ATP; it reads GMPGLGKT. Residues 611–864 enclose the NB-ARC domain; the sequence is LLSLLCDTIG…KVKTCRLHDV (254 aa). The stretch at 749–770 forms a coiled coil; the sequence is SEMEKEVECWEQVANNLGTRIH. 9 LRR repeats span residues 953–978, 980–996, 1027–1050, 1053–1070, 1071–1094, 1098–1118, 1119–1146, 1167–1191, and 1208–1230; these read FKFL…VYLK, FSAH…IYNL, LRHL…SAKL, LETL…LNFP, IRLE…ISAP, YLKL…ADHL, KNLE…MFPQ, FPNL…AMNI, and LIEK…AFKR. One can recognise an HMA domain in the interval 1209–1278; it reads IEKKTLKLNL…AWHARVVVPT (70 aa).

The protein belongs to the disease resistance NB-LRR family.

The protein localises to the cytoplasm. It is found in the membrane. Its function is as follows. Confers resistance to late blight (Phytophthora infestans) races carrying the avirulence gene Avr1. Resistance proteins guard the plant against pathogens that contain an appropriate avirulence protein via an indirect interaction with this avirulence protein. That triggers a defense system including the hypersensitive response, which restricts the pathogen growth. In Solanum demissum (Wild potato), this protein is Putative late blight resistance protein homolog R1B-19 (R1B-19).